A 434-amino-acid polypeptide reads, in one-letter code: Gamma-glutamyl phosphate reductase (434 aa).

Over residues Met1–Ala11 the composition is skewed to polar residues. Positions Met1–Lys26 are disordered. A compositionally biased stretch (basic and acidic residues) spans Arg16–Ala25.

The protein belongs to the gamma-glutamyl phosphate reductase family.

The protein localises to the cytoplasm. It carries out the reaction L-glutamate 5-semialdehyde + phosphate + NADP(+) = L-glutamyl 5-phosphate + NADPH + H(+). It participates in amino-acid biosynthesis; L-proline biosynthesis; L-glutamate 5-semialdehyde from L-glutamate: step 2/2. In terms of biological role, catalyzes the NADPH-dependent reduction of L-glutamate 5-phosphate into L-glutamate 5-semialdehyde and phosphate. The product spontaneously undergoes cyclization to form 1-pyrroline-5-carboxylate. This is Gamma-glutamyl phosphate reductase from Corynebacterium jeikeium (strain K411).